The chain runs to 669 residues: RNA-binding protein 14 (669 aa).

RRM domains are found at residues 1–73 (MKIF…MSRP) and 79–149 (WKIF…LSTK). Glycyl lysine isopeptide (Lys-Gly) (interchain with G-Cter in SUMO2) cross-links involve residues Lys-126, Lys-135, Lys-138, Lys-149, and Lys-153. Disordered regions lie at residues 147 to 175 (STKG…DTAF) and 193 to 232 (NSTG…PLTA). Ser-161 carries the phosphoserine modification. Residue Lys-164 is modified to N6-acetyllysine; alternate. Lys-164 is covalently cross-linked (Glycyl lysine isopeptide (Lys-Gly) (interchain with G-Cter in SUMO2); alternate). Thr-206 is modified (phosphothreonine). Ser-220, Ser-242, Ser-244, Ser-256, Ser-272, and Ser-280 each carry phosphoserine. The segment at 284 to 303 (PYRGQLASPSSQSAAASSLG) is disordered. Residues 287-303 (GQLASPSSQSAAASSLG) show a composition bias toward low complexity. Residues 307-354 (GAQPSASALSSYGGQAAAASSLNSYGAQGSSLASYGNQPSSYGAQAAS) form a TRBP-interacting domain; interaction with STIL region. 4 positions are modified to phosphoserine: Ser-520, Ser-523, Ser-527, and Ser-562. The interval 566-592 (VANANSTPPPYERTRLSPPRASYDDPY) is disordered. Position 572 is a phosphothreonine (Thr-572). Ser-582 is subject to Phosphoserine. A Glycyl lysine isopeptide (Lys-Gly) (interchain with G-Cter in SUMO2) cross-link involves residue Lys-600. Phosphoserine is present on residues Ser-618, Ser-620, Ser-623, Ser-627, Ser-643, and Ser-649.

In terms of assembly, interacts with NCOA6, CITED1 and XRCC5/KU86. Interacts with SS18. Interacts with STIL and interferes with its interaction with CPAP. Interacts with gamma-tubulin. Part of the HDP-RNP complex composed of at least HEXIM1, PRKDC, XRCC5, XRCC6, paraspeckle proteins (SFPQ, NONO, PSPC1, RBM14, and MATR3) and NEAT1 RNA.

It localises to the nucleus. It is found in the nucleolus. The protein resides in the cytoplasm. Its function is as follows. May function as a nuclear receptor coactivator, enhancing transcription through other coactivators such as NCOA6 and CITED1. Regulates centriole biogenesis by suppressing the formation of aberrant centriolar protein complexes in the cytoplasm and thus preserving mitotic spindle integrity. Prevents the formation of the STIL-CPAP complex (which can induce the formation of aberrant centriolar protein complexes) by interfering with the interaction of STIL with CPAP. Plays a role in the regulation of DNA virus-mediated innate immune response by assembling into the HDP-RNP complex, a complex that serves as a platform for IRF3 phosphorylation and subsequent innate immune response activation through the cGAS-STING pathway. This is RNA-binding protein 14 (RBM14) from Pongo abelii (Sumatran orangutan).